A 388-amino-acid polypeptide reads, in one-letter code: Chorismate synthase (388 aa).

The NADP(+) site is built by arginine 39 and arginine 45. FMN is bound by residues 130-132 (RSS), 251-252 (NA), glycine 296, 311-315 (KPIPT), and arginine 337.

The protein belongs to the chorismate synthase family. As to quaternary structure, homotetramer. FMNH2 is required as a cofactor.

It carries out the reaction 5-O-(1-carboxyvinyl)-3-phosphoshikimate = chorismate + phosphate. The protein operates within metabolic intermediate biosynthesis; chorismate biosynthesis; chorismate from D-erythrose 4-phosphate and phosphoenolpyruvate: step 7/7. In terms of biological role, catalyzes the anti-1,4-elimination of the C-3 phosphate and the C-6 proR hydrogen from 5-enolpyruvylshikimate-3-phosphate (EPSP) to yield chorismate, which is the branch point compound that serves as the starting substrate for the three terminal pathways of aromatic amino acid biosynthesis. This reaction introduces a second double bond into the aromatic ring system. This chain is Chorismate synthase, found in Streptococcus pyogenes serotype M49 (strain NZ131).